The primary structure comprises 265 residues: 3-methyl-2-oxobutanoate hydroxymethyltransferase (265 aa).

2 residues coordinate Mg(2+): Asp43 and Asp82. Residues 43-44 (DS), Asp82, and Lys111 each bind 3-methyl-2-oxobutanoate. Glu113 lines the Mg(2+) pocket. Glu180 (proton acceptor) is an active-site residue.

The protein belongs to the PanB family. As to quaternary structure, homodecamer; pentamer of dimers. The cofactor is Mg(2+).

It localises to the cytoplasm. The catalysed reaction is 3-methyl-2-oxobutanoate + (6R)-5,10-methylene-5,6,7,8-tetrahydrofolate + H2O = 2-dehydropantoate + (6S)-5,6,7,8-tetrahydrofolate. Its pathway is cofactor biosynthesis; (R)-pantothenate biosynthesis; (R)-pantoate from 3-methyl-2-oxobutanoate: step 1/2. In terms of biological role, catalyzes the reversible reaction in which hydroxymethyl group from 5,10-methylenetetrahydrofolate is transferred onto alpha-ketoisovalerate to form ketopantoate. The protein is 3-methyl-2-oxobutanoate hydroxymethyltransferase of Francisella tularensis subsp. mediasiatica (strain FSC147).